The following is a 22-amino-acid chain: Caerin-3.4 (22 aa).

A Lysine amide modification is found at Lys-22.

Expressed by the skin parotoid and/or rostral glands.

It is found in the secreted. Its function is as follows. Antibacterial peptide, that adopts an alpha helical conformation which can disrupt bacterial membranes. Each caerin displays a different antimicrobial specificity. The sequence is that of Caerin-3.4 from Ranoidea caerulea (Green tree frog).